A 174-amino-acid chain; its full sequence is Crossover junction endodeoxyribonuclease RuvC (174 aa).

Active-site residues include Asp-8, Glu-67, and Asp-139. Asp-8, Glu-67, and Asp-139 together coordinate Mg(2+).

The protein belongs to the RuvC family. In terms of assembly, homodimer which binds Holliday junction (HJ) DNA. The HJ becomes 2-fold symmetrical on binding to RuvC with unstacked arms; it has a different conformation from HJ DNA in complex with RuvA. In the full resolvosome a probable DNA-RuvA(4)-RuvB(12)-RuvC(2) complex forms which resolves the HJ. Mg(2+) serves as cofactor.

The protein resides in the cytoplasm. The catalysed reaction is Endonucleolytic cleavage at a junction such as a reciprocal single-stranded crossover between two homologous DNA duplexes (Holliday junction).. In terms of biological role, the RuvA-RuvB-RuvC complex processes Holliday junction (HJ) DNA during genetic recombination and DNA repair. Endonuclease that resolves HJ intermediates. Cleaves cruciform DNA by making single-stranded nicks across the HJ at symmetrical positions within the homologous arms, yielding a 5'-phosphate and a 3'-hydroxyl group; requires a central core of homology in the junction. The consensus cleavage sequence is 5'-(A/T)TT(C/G)-3'. Cleavage occurs on the 3'-side of the TT dinucleotide at the point of strand exchange. HJ branch migration catalyzed by RuvA-RuvB allows RuvC to scan DNA until it finds its consensus sequence, where it cleaves and resolves the cruciform DNA. This is Crossover junction endodeoxyribonuclease RuvC from Pseudomonas putida (strain W619).